We begin with the raw amino-acid sequence, 483 residues long: Glutamyl-tRNA(Gln) amidotransferase subunit A (483 aa).

Catalysis depends on charge relay system residues lysine 77 and serine 152. Serine 176 acts as the Acyl-ester intermediate in catalysis.

Belongs to the amidase family. GatA subfamily. As to quaternary structure, heterotrimer of A, B and C subunits.

The enzyme catalyses L-glutamyl-tRNA(Gln) + L-glutamine + ATP + H2O = L-glutaminyl-tRNA(Gln) + L-glutamate + ADP + phosphate + H(+). Functionally, allows the formation of correctly charged Gln-tRNA(Gln) through the transamidation of misacylated Glu-tRNA(Gln) in organisms which lack glutaminyl-tRNA synthetase. The reaction takes place in the presence of glutamine and ATP through an activated gamma-phospho-Glu-tRNA(Gln). The polypeptide is Glutamyl-tRNA(Gln) amidotransferase subunit A (Listeria monocytogenes serotype 4b (strain CLIP80459)).